A 56-amino-acid polypeptide reads, in one-letter code: Large ribosomal subunit protein bL32 (56 aa).

Belongs to the bacterial ribosomal protein bL32 family.

The chain is Large ribosomal subunit protein bL32 from Prochlorococcus marinus (strain MIT 9215).